The following is a 97-amino-acid chain: High mobility group protein homolog NHP1 (97 aa).

Residues 1-24 (MAGASDRTGVRRPRKAKKDPNAPK) are disordered. A DNA-binding region (HMG box) is located at residues 23–93 (PKRALSSYMF…RYEREKAEYA (71 aa)).

The protein localises to the nucleus. This is High mobility group protein homolog NHP1 from Babesia bovis.